Consider the following 181-residue polypeptide: ATP-dependent protease subunit HslV (181 aa).

The active site involves T11. 3 residues coordinate Na(+): A166, C169, and T172.

This sequence belongs to the peptidase T1B family. HslV subfamily. A double ring-shaped homohexamer of HslV is capped on each side by a ring-shaped HslU homohexamer. The assembly of the HslU/HslV complex is dependent on binding of ATP.

It is found in the cytoplasm. The catalysed reaction is ATP-dependent cleavage of peptide bonds with broad specificity.. With respect to regulation, allosterically activated by HslU binding. Protease subunit of a proteasome-like degradation complex believed to be a general protein degrading machinery. The sequence is that of ATP-dependent protease subunit HslV from Chlorobaculum parvum (strain DSM 263 / NCIMB 8327) (Chlorobium vibrioforme subsp. thiosulfatophilum).